An 86-amino-acid chain; its full sequence is Small ribosomal subunit protein bS20 (86 aa).

The segment covering 1 to 27 (MANSKSAKKRAIQAEKRRQHNASRRSM) has biased composition (basic residues). Residues 1–28 (MANSKSAKKRAIQAEKRRQHNASRRSMM) are disordered.

Belongs to the bacterial ribosomal protein bS20 family.

Binds directly to 16S ribosomal RNA. This Vibrio parahaemolyticus serotype O3:K6 (strain RIMD 2210633) protein is Small ribosomal subunit protein bS20.